Here is a 608-residue protein sequence, read N- to C-terminus: Fatty acid amide hydrolase (608 aa).

Catalysis depends on charge relay system residues K206 and S282. 303–306 (GGGS) serves as a coordination point for substrate. Catalysis depends on S306, which acts as the Acyl-ester intermediate.

Belongs to the amidase family. Forms homodimers.

It is found in the endoplasmic reticulum membrane. The protein localises to the cell membrane. It catalyses the reaction N-(9Z,12Z-octadecadienoyl)-ethanolamine + H2O = ethanolamine + (9Z,12Z)-octadecadienoate. The catalysed reaction is N-hexadecanoylethanolamine + H2O = ethanolamine + hexadecanoate. It carries out the reaction N-dodecanoylethanolamine + H2O = dodecanoate + ethanolamine. Its activity is regulated as follows. Inhibited by methyl arachidonyl fluorophosphonate (MAFP). Its function is as follows. Catalyzes the hydrolysis of bioactive endogenous fatty acid amides to their corresponding acids. The hydrolysis of endogenous amidated lipids terminates their participation as lipid mediators in various signaling systems. Converts a wide range of N-acylethanolamines (NAEs) to their corresponding free fatty acids and ethanolamine. The chain is Fatty acid amide hydrolase from Oryza sativa subsp. indica (Rice).